The chain runs to 929 residues: ATP-dependent RNA helicase DDX42 (929 aa).

K5 is subject to N6-acetyllysine. R12 bears the Omega-N-methylarginine mark. Disordered stretches follow at residues 25 to 119 and 182 to 203; these read KKEE…LEAF and EYDSDGNPIAPSKKIIDPLPPI. Residues 35–52 show a composition bias toward low complexity; sequence SHSAFGAASSSSGFGKSA. Phosphoserine is present on S58. Residues 70–84 show a composition bias toward acidic residues; sequence DEENAYFEDEEEDSS. Phosphoserine is present on residues S96, S104, S109, and S111. The stretch at 116–157 forms a coiled coil; it reads LEAFMAEVEDQAARDMKRLEEKDKERKNVKGIRDDIEEEDDQ. Phosphoserine is present on S185. Residues 253 to 281 carry the Q motif motif; sequence SSFAHFGFDEQLMHQIRKSEYTQPTPIQC. The Helicase ATP-binding domain occupies 284 to 459; sequence VPVALSGRDM…RDILIDPIRV (176 aa). ATP is bound at residue 297-304; it reads AKTGSGKT. The DEAD box motif lies at 407-410; it reads DEAD. Positions 487–632 constitute a Helicase C-terminal domain; sequence WLTRRLVEFT…HVSKELLDLA (146 aa). Disordered stretches follow at residues 662–682 and 723–929; these read ERPGLGSENSDRGNNNNVMSN and GTSS…RWDS. The span at 723-737 shows a compositional bias: low complexity; that stretch reads GTSSAGASGWTSAGS. Polar residues-rich tracts occupy residues 738–777 and 787–798; these read LNSVPTNSAQQGHNSPDNPMTSSTKNIPGFNNSGNISSAP and GVNNTASGNNSR. The tract at residues 739 to 828 is necessary for interaction with TP53BP2; the sequence is NSVPTNSAQQ…RHSHGDGGNR (90 aa). Over residues 821–911 the composition is skewed to basic and acidic residues; that stretch reads SHGDGGNRHG…KVDSKTDKTP (91 aa). Residue K894 forms a Glycyl lysine isopeptide (Lys-Gly) (interchain with G-Cter in SUMO2) linkage.

It belongs to the DEAD box helicase family. DDX42 subfamily. Transient component of the SF3B subcomplex of the 17S U2 SnRNP complex. Interacts (via the C-terminus) with TP53BP2; the interaction is not inhibitied by TP53BP2 ubiquitination and is independent of p53/TP53.

It localises to the cytoplasm. The protein resides in the nucleus. The catalysed reaction is ATP + H2O = ADP + phosphate + H(+). ATP-dependent RNA helicase that binds to partially double-stranded RNAs (dsRNAs) in order to unwind RNA secondary structures. Unwinding is promoted in the presence of single-strand binding proteins. Also mediates RNA duplex formation thereby displacing the single-strand RNA binding protein. ATP and ADP modulate its activity: ATP binding and hydrolysis by DDX42 triggers RNA strand separation, whereas the ADP-bound form of the protein triggers annealing of complementary RNA strands. Required for assembly of the 17S U2 SnRNP complex of the spliceosome, a large ribonucleoprotein complex that removes introns from transcribed pre-mRNAs: DDX42 associates transiently with the SF3B subcomplex of the 17S U2 SnRNP complex and is released after fulfilling its role in the assembly of 17S U2 SnRNP. Involved in the survival of cells by interacting with TP53BP2 and thereby counteracting the apoptosis-stimulating activity of TP53BP2. Relocalizes TP53BP2 to the cytoplasm. This Mus musculus (Mouse) protein is ATP-dependent RNA helicase DDX42 (Ddx42).